A 557-amino-acid polypeptide reads, in one-letter code: Probable asparagine synthetase [glutamine-hydrolyzing] (557 aa).

Catalysis depends on C2, which acts as the For GATase activity. Residues 2-188 (CGILAILNSL…PGHYFSSKTK (187 aa)) enclose the Glutamine amidotransferase type-2 domain. Residues 50 to 54 (RLAIV), 75 to 77 (NGE), and D101 each bind L-glutamine. The region spanning 217-466 (AIKEAFEQAV…LPSSVLWRQK (250 aa)) is the Asparagine synthetase domain. ATP-binding positions include L239, I279, and 353 to 354 (SG). The tract at residues 538-557 (WGASQDPSGRAQKVHLSTTE) is disordered.

It carries out the reaction L-aspartate + L-glutamine + ATP + H2O = L-asparagine + L-glutamate + AMP + diphosphate + H(+). It functions in the pathway amino-acid biosynthesis; L-asparagine biosynthesis; L-asparagine from L-aspartate (L-Gln route): step 1/1. The protein is Probable asparagine synthetase [glutamine-hydrolyzing] (asns) of Dictyostelium discoideum (Social amoeba).